The following is a 1336-amino-acid chain: Vascular endothelial growth factor receptor 1 (1336 aa).

Residues 1 to 22 (MVSCWDTAVLPCALLGCLLLTG) form the signal peptide. Residues 23-758 (YCSGSKLKGP…QGTSDKSNLE (736 aa)) are Extracellular-facing. Ig-like C2-type domains follow at residues 32–121 (PELS…KKME), 151–214 (GREL…VNGH), 230–327 (LDVQ…TSVH), 335–421 (SVKH…LTAT), 429–549 (QIYE…RDIR), 556–655 (PNGF…EVLV), and 661–747 (PLLL…AYLT). Disulfide bonds link Cys-53-Cys-107 and Cys-158-Cys-207. Residues Asn-100, Asn-164, Asn-196, and Asn-251 are each glycosylated (N-linked (GlcNAc...) asparagine). A disulfide bridge links Cys-252 with Cys-311. N-linked (GlcNAc...) asparagine glycans are attached at residues Asn-323, Asn-417, Asn-474, Asn-516, Asn-597, Asn-625, Asn-666, and Asn-713. 2 cysteine pairs are disulfide-bonded: Cys-454–Cys-535 and Cys-577–Cys-636. Cys-682 and Cys-731 form a disulfide bridge. A helical transmembrane segment spans residues 759–780 (LITLTCTCVAATLFWLLLTLFI). Residues 781–1336 (RKLKRSSSEV…SVVLYSSPPA (556 aa)) are Cytoplasmic-facing. A Protein kinase domain is found at 827–1158 (LKLGKSLGRG…ELVEKLGDLL (332 aa)). ATP is bound by residues 833-841 (LGRGAFGKV) and Lys-861. Phosphotyrosine; by autocatalysis is present on Tyr-914. Residues 941–957 (KKEKLEPDLEQDQKPRL) are compositionally biased toward basic and acidic residues. The segment at 941-982 (KKEKLEPDLEQDQKPRLDSVSSSESFTSSGFQEDKSVSDVEG) is disordered. The span at 959–969 (SVSSSESFTSS) shows a compositional bias: low complexity. The Proton acceptor role is filled by Asp-1022. A phosphotyrosine; by autocatalysis mark is found at Tyr-1053, Tyr-1169, Tyr-1213, Tyr-1242, Tyr-1325, and Tyr-1331. Residues 1304-1326 (RQEDEDDPELGKESCCSPPPDYN) form a disordered region.

This sequence belongs to the protein kinase superfamily. Tyr protein kinase family. CSF-1/PDGF receptor subfamily. Interacts with VEGFA, VEGFB and PGF. Monomer in the absence of bound VEGFA, VEGFB or PGF. Homodimer in the presence of bound VEGFA, VEGFB and PGF. Can also form a heterodimer with KDR. Interacts (tyrosine phosphorylated) with CBL, CRK, GRB2, NCK1, PIK3R1, PLCG, PSEN1 and PTPN11. Probably interacts with PTPRB. Interacts with RACK1. Identified in a complex with CBL and CD2AP. Post-translationally, N-glycosylated. In terms of processing, ubiquitinated after VEGFA-mediated autophosphorylation, leading to proteolytic degradation. Autophosphorylated on tyrosine residues upon ligand binding. Autophosphorylation occurs in trans, i.e. one subunit of the dimeric receptor phosphorylates tyrosine residues on the other subunit. Phosphorylation at Tyr-1169 is important for interaction with PLCG. Phosphorylation at Tyr-1213 is important for interaction with PIK3R1, PTPN11, GRB2, and PLCG. Phosphorylation at Tyr-1331 is important for endocytosis and for interaction with CBL, NCK1 and CRK. Is probably dephosphorylated by PTPRB.

Its subcellular location is the cell membrane. The protein localises to the endosome. The catalysed reaction is L-tyrosyl-[protein] + ATP = O-phospho-L-tyrosyl-[protein] + ADP + H(+). With respect to regulation, present in an inactive conformation in the absence of bound ligand. Binding of VEGFA, VEGFB or PGF leads to dimerization and activation by autophosphorylation on tyrosine residues. Functionally, tyrosine-protein kinase that acts as a cell-surface receptor for VEGFA, VEGFB and PGF, and plays an essential role in the development of embryonic vasculature, the regulation of angiogenesis, cell survival, cell migration, macrophage function, chemotaxis, and cancer cell invasion. Acts as a positive regulator of postnatal retinal hyaloid vessel regression. May play an essential role as a negative regulator of embryonic angiogenesis by inhibiting excessive proliferation of endothelial cells. Can promote endothelial cell proliferation, survival and angiogenesis in adulthood. Its function in promoting cell proliferation seems to be cell-type specific. Promotes PGF-mediated proliferation of endothelial cells, and proliferation of some types of cancer cells, but does not promote proliferation of normal fibroblasts. Has very high affinity for VEGFA and relatively low protein kinase activity; may function as a negative regulator of VEGFA signaling by limiting the amount of free VEGFA and preventing its binding to KDR. Modulates KDR signaling by forming heterodimers with KDR. Ligand binding leads to the activation of several signaling cascades. Activation of PLCG leads to the production of the cellular signaling molecules diacylglycerol and inositol 1,4,5-trisphosphate and the activation of protein kinase C. Mediates phosphorylation of PIK3R1, the regulatory subunit of phosphatidylinositol 3-kinase, leading to the activation of phosphatidylinositol kinase and the downstream signaling pathway. Mediates activation of MAPK1/ERK2, MAPK3/ERK1 and the MAP kinase signaling pathway, as well as of the AKT1 signaling pathway. Phosphorylates SRC, YES1 and PLCG, and may also phosphorylate CBL. Promotes phosphorylation of AKT1 and PTK2/FAK1. The polypeptide is Vascular endothelial growth factor receptor 1 (Flt1) (Rattus norvegicus (Rat)).